The chain runs to 156 residues: SsrA-binding protein (156 aa).

Belongs to the SmpB family.

Its subcellular location is the cytoplasm. Functionally, required for rescue of stalled ribosomes mediated by trans-translation. Binds to transfer-messenger RNA (tmRNA), required for stable association of tmRNA with ribosomes. tmRNA and SmpB together mimic tRNA shape, replacing the anticodon stem-loop with SmpB. tmRNA is encoded by the ssrA gene; the 2 termini fold to resemble tRNA(Ala) and it encodes a 'tag peptide', a short internal open reading frame. During trans-translation Ala-aminoacylated tmRNA acts like a tRNA, entering the A-site of stalled ribosomes, displacing the stalled mRNA. The ribosome then switches to translate the ORF on the tmRNA; the nascent peptide is terminated with the 'tag peptide' encoded by the tmRNA and targeted for degradation. The ribosome is freed to recommence translation, which seems to be the essential function of trans-translation. The polypeptide is SsrA-binding protein (Thermoanaerobacter pseudethanolicus (strain ATCC 33223 / 39E) (Clostridium thermohydrosulfuricum)).